A 207-amino-acid chain; its full sequence is MAKTYDYLFKLLLIGDSGVGKTCLLFRFSEDAFNTTFISTIGIDFKIRTIELDGKKIKLQIWDTAGQERFRTITTAYYRGAMGIMLVYDITNEKSFDNIKNWIRNIEEHASSDVERMILGNKCDMNDKRQVSKERGEKLAIDYGIKFLETSAKSSANVEEAFFTLARDIMTKLNRKMNDSNSAGAGGPVKITENRSKKTSFFRCSLL.

10 residues coordinate GTP: serine 17, glycine 18, valine 19, glycine 20, lysine 21, threonine 22, cysteine 23, threonine 35, serine 39, and threonine 40. Threonine 22 contacts Mg(2+). 2 short sequence motifs (switch) span residues 31 to 45 and 63 to 80; these read DAFN…GIDF and DTAG…YYRG. Positions 40 and 63 each coordinate Mg(2+). A GTP-binding site is contributed by glycine 66. Threonine 72 bears the Phosphothreonine; by LRRK2 mark. GTP is bound by residues asparagine 121, lysine 122, aspartate 124, alanine 152, and lysine 153. At serine 180 the chain carries Phosphoserine. Cysteine 204 carries the cysteine methyl ester modification. Cysteine 204 is lipidated: S-geranylgeranyl cysteine. Positions 205-207 are cleaved as a propeptide — removed in mature form; it reads SLL.

The protein belongs to the small GTPase superfamily. Rab family. Associated with actin, delta-catenin and alpha and beta tubulins. Interacts with OTOF. Interacts with PEX5R. Interacts with RAB3IP. Interacts with VIM. Interacts with CDH1. Interacts with MICALL2. Interacts with GDI1, GDI2, CHML and CHM; phosphorylation at Thr-72 disrupts these interactions. Interacts with MICAL1. Mg(2+) serves as cofactor. Post-translationally, phosphorylation of Thr-72 in the switch II region by LRRK2 prevents the association of RAB regulatory proteins, including CHM, CHML and RAB GDP dissociation inhibitors GDI1 and GDI2.

It localises to the cell membrane. It is found in the cytoplasmic vesicle. The protein localises to the phagosome. Its subcellular location is the phagosome membrane. The protein resides in the endosome membrane. It catalyses the reaction GTP + H2O = GDP + phosphate + H(+). Its activity is regulated as follows. Regulated by guanine nucleotide exchange factors (GEFs) including RAB3IP/RABIN8 which promotes the exchange of bound GDP for free GTP. Regulated by GTPase activating proteins (GAPs) which increase the GTP hydrolysis activity. Inhibited by GDP dissociation inhibitors (GDIs). The small GTPases Rab are key regulators of intracellular membrane trafficking, from the formation of transport vesicles to their fusion with membranes. Rabs cycle between an inactive GDP-bound form and an active GTP-bound form that is able to recruit to membranes different sets of downstream effectors directly responsible for vesicle formation, movement, tethering and fusion. RAB8B may be involved in polarized vesicular trafficking and neurotransmitter release. May participate in cell junction dynamics in Sertoli cells. May also participate in the export of a subset of neosynthesized proteins through a Rab8-Rab10-Rab11-dependent endososomal export route. This chain is Ras-related protein Rab-8B, found in Homo sapiens (Human).